A 167-amino-acid polypeptide reads, in one-letter code: Envelope glycoprotein L (167 aa).

An N-terminal signal peptide occupies residues 1–20 (MGIFALFAVLWTTLLVTSHA). The interval 18 to 131 (SHAYVALPCC…ADSSIHNVNI (114 aa)) is interaction with gH. The segment covering 142-154 (RTGSVSGSQTRAK) has biased composition (polar residues). The disordered stretch occupies residues 142 to 167 (RTGSVSGSQTRAKSSSRRAHAGQKGK). Over residues 155 to 167 (SSSRRAHAGQKGK) the composition is skewed to basic residues.

Belongs to the herpesviridae glycoprotein L family. As to quaternary structure, interacts with glycoprotein H (gH); this interaction is necessary for the correct processing and cell surface expression of gH. The heterodimer gH/gL seems to interact with gB trimers during fusion. When in complex with gH, interacts with host EPHA2; this interaction triggers EPHA2 phosphorylation and endocytosis, allowing virus entry.

It localises to the virion membrane. It is found in the host cell membrane. The protein localises to the host Golgi apparatus. The protein resides in the host trans-Golgi network. The heterodimer glycoprotein H-glycoprotein L is required for the fusion of viral and plasma membranes leading to virus entry into the host cell. Acts as a functional inhibitor of gH and maintains gH in an inhibited form. Upon binding to host integrins, gL dissociates from gH leading to activation of the viral fusion glycoproteins gB and gH. Targets heparan sulfate proteoglycans of the syndecan family as well as host EPHA2 to promote viral entry. The polypeptide is Envelope glycoprotein L (Human herpesvirus 8 type P (isolate GK18) (HHV-8)).